A 782-amino-acid chain; its full sequence is Endonuclease MutS2 (782 aa).

ATP is bound at residue 336-343; sequence GPNTGGKT. One can recognise a Smr domain in the interval 707–782; it reads LDLRGYRYED…GFGVTVATLK (76 aa).

It belongs to the DNA mismatch repair MutS family. MutS2 subfamily. Homodimer. Binds to stalled ribosomes, contacting rRNA.

Functionally, endonuclease that is involved in the suppression of homologous recombination and thus may have a key role in the control of bacterial genetic diversity. Acts as a ribosome collision sensor, splitting the ribosome into its 2 subunits. Detects stalled/collided 70S ribosomes which it binds and splits by an ATP-hydrolysis driven conformational change. Acts upstream of the ribosome quality control system (RQC), a ribosome-associated complex that mediates the extraction of incompletely synthesized nascent chains from stalled ribosomes and their subsequent degradation. Probably generates substrates for RQC. The sequence is that of Endonuclease MutS2 from Staphylococcus aureus (strain bovine RF122 / ET3-1).